The chain runs to 129 residues: Large ribosomal subunit protein uL22 (129 aa).

It belongs to the universal ribosomal protein uL22 family. As to quaternary structure, part of the 50S ribosomal subunit.

In terms of biological role, this protein binds specifically to 23S rRNA; its binding is stimulated by other ribosomal proteins, e.g. L4, L17, and L20. It is important during the early stages of 50S assembly. It makes multiple contacts with different domains of the 23S rRNA in the assembled 50S subunit and ribosome. Its function is as follows. The globular domain of the protein is located near the polypeptide exit tunnel on the outside of the subunit, while an extended beta-hairpin is found that lines the wall of the exit tunnel in the center of the 70S ribosome. The protein is Large ribosomal subunit protein uL22 of Onion yellows phytoplasma (strain OY-M).